The sequence spans 1200 residues: Ice nucleation protein (1200 aa).

Residues 176 to 1151 (ATYGSTLSGD…LSAGEDSILI (976 aa)) form an octapeptide periodicity region.

Belongs to the bacterial ice nucleation protein family.

Its subcellular location is the cell outer membrane. Functionally, ice nucleation proteins enable bacteria to nucleate crystallization in supercooled water. This is Ice nucleation protein (inaZ) from Pseudomonas syringae pv. syringae.